Here is a 107-residue protein sequence, read N- to C-terminus: UPF0145 protein YbjQ (107 aa).

This sequence belongs to the UPF0145 family.

This Escherichia coli O139:H28 (strain E24377A / ETEC) protein is UPF0145 protein YbjQ.